A 556-amino-acid polypeptide reads, in one-letter code: Endoplasmic reticulum membrane protein 65 (556 aa).

The Cytoplasmic segment spans residues 1-87 (MQHKDTAVAK…IRIPMFLEKF (87 aa)). Position 22 is a phosphoserine (S22). Residues 88-108 (MLFALLTSLDCFLYYFTVLPI) form a helical membrane-spanning segment. The Lumenal portion of the chain corresponds to 109–151 (RLIKGYVKQFKSYRQHYRLQQRSGHKNKIPFRYRITSREYKER). A helical membrane pass occupies residues 152-172 (CMIFIIVISSILLSKLDTSKL). Over 173–224 (YHRIKRQSTMKLYMLFSVLEMADKMLASLGQSLLTVMLSRKNSERILLHKCL) the chain is Cytoplasmic. Residues 225–245 (LVSMSLTYVTIHGYVLVYQAI) traverse the membrane as a helical segment. Topologically, residues 246–330 (SLNIAVNSYS…INFWSPRSTL (85 aa)) are lumenal. An N-linked (GlcNAc...) asparagine glycan is attached at N318. A helical membrane pass occupies residues 331–351 (SIVINILCGPMVSVVGSEVLV). At 352-391 (DWAKHAYITKFNRIRPQIYDKFYYIIYKDYSTRTHKLEDR) the chain is on the cytoplasmic side. The helical transmembrane segment at 392-412 (LGLPLPAFVVLFIVMVRPTLF) threads the bilayer. Residues 413 to 428 (KSSEPSYLPSLFRILF) are Lumenal-facing. A helical membrane pass occupies residues 429-449 (MGASVFLLALLAKFTLDLILI). The Cytoplasmic portion of the chain corresponds to 450–556 (KWSKRIEQRF…RYKMVSKRIW (107 aa)).

It belongs to the TAPT1 family. Interacts with SLP1.

It is found in the endoplasmic reticulum membrane. It localises to the mitochondrion. Its function is as follows. May be involved in membrane protein folding. The polypeptide is Endoplasmic reticulum membrane protein 65 (Saccharomyces cerevisiae (strain ATCC 204508 / S288c) (Baker's yeast)).